The sequence spans 314 residues: Serine/threonine-protein phosphatase CPPED1 (314 aa).

S2 carries the phosphoserine modification. The tract at residues 47–250 (KAWSTGDCDN…KVVFSGHYHR (204 aa)) is catalytic. 4 residues coordinate a divalent metal cation: D53, D90, N127, and H247. A Phosphoserine modification is found at S294.

It belongs to the metallophosphoesterase superfamily. CPPED1 family. The cofactor is a divalent metal cation. In terms of tissue distribution, expressed in subcutaneous adipose tissue.

It is found in the cytoplasm. The catalysed reaction is O-phospho-L-seryl-[protein] + H2O = L-seryl-[protein] + phosphate. The enzyme catalyses O-phospho-L-threonyl-[protein] + H2O = L-threonyl-[protein] + phosphate. Protein phosphatase that dephosphorylates AKT family kinase specifically at 'Ser-473', blocking cell cycle progression and promoting cell apoptosis. May play an inhibitory role in glucose uptake by adipocytes. In Homo sapiens (Human), this protein is Serine/threonine-protein phosphatase CPPED1 (CPPED1).